Reading from the N-terminus, the 121-residue chain is Small ribosomal subunit protein bS16 (121 aa).

The tract at residues 88 to 121 is disordered; the sequence is GKAKLEKEKKAKAKTKEEENEGSKTESGSNEAES. A compositionally biased stretch (basic and acidic residues) spans 90 to 111; it reads AKLEKEKKAKAKTKEEENEGSK. Residues 112–121 are compositionally biased toward polar residues; it reads TESGSNEAES.

Belongs to the bacterial ribosomal protein bS16 family.

This Prochlorococcus marinus (strain MIT 9215) protein is Small ribosomal subunit protein bS16.